Reading from the N-terminus, the 484-residue chain is Iroquois-class homeodomain protein IRX-5 (484 aa).

A DNA-binding region (homeobox; TALE-type) is located at residues 112–174; it reads DPAYRKNATR…NARRRLKKEN (63 aa). Disordered stretches follow at residues 176-393 and 424-443; these read MTWT…QCPF and GHPG…FNGL. Positions 185–202 are enriched in acidic residues; that stretch reads EDEEEEENIDLEKNDEDE. 2 stretches are compositionally biased toward basic and acidic residues: residues 203–212 and 249–265; these read PQKPEDKGDL and SDFK…ELPR. Ser-273 carries the phosphoserine modification. Residues 318–328 show a composition bias toward pro residues; sequence SPPPPPPPPPA. A compositionally biased stretch (low complexity) spans 375-389; sequence SRASPAPAPARSPSA. Ser-465 is modified (phosphoserine).

The protein belongs to the TALE/IRO homeobox family. Not expressed in the developing metanephric kidney or adult kidney.

The protein resides in the nucleus. Functionally, establishes the cardiac repolarization gradient by its repressive actions on the KCND2 potassium-channel gene. Required for retinal cone bipolar cell differentiation. May regulate contrast adaptation in the retina and control specific aspects of visual function in circuits of the mammalian retina. Involved in craniofacial and gonadal development. Modulates the migration of progenitor cell populations in branchial arches and gonads by repressing CXCL12. This Mus musculus (Mouse) protein is Iroquois-class homeodomain protein IRX-5 (Irx5).